We begin with the raw amino-acid sequence, 359 residues long: DNA replication and repair protein RecF (359 aa).

30 to 37 (GPNGSGKT) is a binding site for ATP.

The protein belongs to the RecF family.

The protein localises to the cytoplasm. In terms of biological role, the RecF protein is involved in DNA metabolism; it is required for DNA replication and normal SOS inducibility. RecF binds preferentially to single-stranded, linear DNA. It also seems to bind ATP. In Aliivibrio fischeri (strain MJ11) (Vibrio fischeri), this protein is DNA replication and repair protein RecF.